A 117-amino-acid polypeptide reads, in one-letter code: uncharacterized protein (117 aa).

It localises to the cytoplasm. It is found in the nucleus. This is an uncharacterized protein from Saccharomyces cerevisiae (strain ATCC 204508 / S288c) (Baker's yeast).